The sequence spans 121 residues: Large ribosomal subunit protein bL20 (121 aa).

It belongs to the bacterial ribosomal protein bL20 family.

Functionally, binds directly to 23S ribosomal RNA and is necessary for the in vitro assembly process of the 50S ribosomal subunit. It is not involved in the protein synthesizing functions of that subunit. The sequence is that of Large ribosomal subunit protein bL20 (rplT) from Chlamydia pneumoniae (Chlamydophila pneumoniae).